A 2155-amino-acid polypeptide reads, in one-letter code: Alpha-tectorin (2155 aa).

A signal peptide spans Met1 to Pro24. 8 N-linked (GlcNAc...) asparagine glycosylation sites follow: Asn34, Asn187, Asn215, Asn278, Asn455, Asn506, Asn528, and Asn560. Residues Pro98–Lys252 form the NIDO domain. The VWFC domain maps to Cys260–Cys314. The VWFD 1 domain occupies Ser320–Gly500. 2 disulfide bridges follow: Cys322–Cys461 and Cys344–Cys499. A TIL 1 domain is found at Cys597–Cys650. N-linked (GlcNAc...) asparagine glycans are attached at residues Asn670, Asn687, Asn813, Asn843, Asn855, Asn898, Asn920, Asn931, and Asn949. The VWFD 2 domain occupies Thr711–Asn886. A disulfide bond links Cys713 and Cys849. Residues Cys984–Cys1036 enclose the TIL 2 domain. Residues Asn1048, Asn1064, Asn1235, and Asn1364 are each glycosylated (N-linked (GlcNAc...) asparagine). The VWFD 3 domain occupies Ala1098–Gln1278. Intrachain disulfides connect Cys1100-Cys1241 and Cys1122-Cys1277. The region spanning Cys1372–Cys1425 is the TIL 3 domain. The VWFD 4 domain maps to Ser1485–Asn1666. 7 disulfides stabilise this stretch: Cys1487–Cys1622, Cys1509–Cys1665, Cys1717–Cys1775, Cys1741–Cys1784, Cys1786–Cys1818, Cys1806–Cys1898, and Cys1837–Cys1857. Residues Asn1538, Asn1565, Asn1756, Asn1772, Asn1794, Asn1851, Asn1864, Asn1880, Asn1920, and Asn1939 are each glycosylated (N-linked (GlcNAc...) asparagine). Residues Thr1805 to Asn2059 enclose the ZP domain. 3 cysteine pairs are disulfide-bonded: Cys1980–Cys2040, Cys2001–Cys2056, and Cys2045–Cys2052. The GPI-anchor amidated asparagine moiety is linked to residue Asn2091. Positions Gly2092 to Ser2155 are cleaved as a propeptide — removed in mature form.

May form homomeric filament after self-association or heteromeric filament after association with beta-tectorin. Interacts with CEACAM16. In terms of processing, 3 products of tectorin seem to exist: HMM, MMM and LMM. They may be generated by active processing or the result of proteolysis occurring between intrachain disulfide bonds. The presence of a hydrophobic C-terminus preceded by a potential cleavage site strongly suggests that tectorins are synthesized as glycosylphosphatidylinositol-linked, membrane-bound precursors. Tectorins are targeted to the apical surface of the inner ear epithelia by the lipid and proteolytically released into the extracellular compartment. Cochlea-specific.

The protein resides in the cell membrane. It is found in the secreted. The protein localises to the extracellular space. It localises to the extracellular matrix. Its function is as follows. One of the major non-collagenous components of the tectorial membrane. The tectorial membrane is an extracellular matrix of the inner ear that covers the neuroepithelium of the cochlea and contacts the stereocilia bundles of specialized sensory hair cells. Sound induces movement of these hair cells relative to the tectorial membrane, deflects the stereocilia and leads to fluctuations in hair-cell membrane potential, transducing sound into electrical signals. This Mus musculus (Mouse) protein is Alpha-tectorin (Tecta).